The chain runs to 347 residues: Phenylalanine--tRNA ligase alpha subunit (347 aa).

Residue glutamate 261 coordinates Mg(2+).

It belongs to the class-II aminoacyl-tRNA synthetase family. Phe-tRNA synthetase alpha subunit type 1 subfamily. Tetramer of two alpha and two beta subunits. It depends on Mg(2+) as a cofactor.

Its subcellular location is the cytoplasm. It catalyses the reaction tRNA(Phe) + L-phenylalanine + ATP = L-phenylalanyl-tRNA(Phe) + AMP + diphosphate + H(+). The polypeptide is Phenylalanine--tRNA ligase alpha subunit (Streptococcus pyogenes serotype M3 (strain ATCC BAA-595 / MGAS315)).